Reading from the N-terminus, the 292-residue chain is tRNA-cytidine(32) 2-sulfurtransferase (292 aa).

Residues 54–59 (SGGKDS) carry the PP-loop motif motif. Positions 129, 132, and 220 each coordinate [4Fe-4S] cluster.

Belongs to the TtcA family. In terms of assembly, homodimer. Mg(2+) is required as a cofactor. The cofactor is [4Fe-4S] cluster.

The protein localises to the cytoplasm. It catalyses the reaction cytidine(32) in tRNA + S-sulfanyl-L-cysteinyl-[cysteine desulfurase] + AH2 + ATP = 2-thiocytidine(32) in tRNA + L-cysteinyl-[cysteine desulfurase] + A + AMP + diphosphate + H(+). It participates in tRNA modification. In terms of biological role, catalyzes the ATP-dependent 2-thiolation of cytidine in position 32 of tRNA, to form 2-thiocytidine (s(2)C32). The sulfur atoms are provided by the cysteine/cysteine desulfurase (IscS) system. This is tRNA-cytidine(32) 2-sulfurtransferase from Cereibacter sphaeroides (strain ATCC 17025 / ATH 2.4.3) (Rhodobacter sphaeroides).